We begin with the raw amino-acid sequence, 983 residues long: Polyhomeotic-like protein 3 (983 aa).

Disordered regions lie at residues 1–34, 103–149, 225–283, 313–332, 339–410, 477–509, and 601–620; these read MDTE…MQQP, LSSG…SSTS, VLSS…TAVT, LHSP…QQQQ, LQNS…SQSP, PGQQ…STSP, and DECV…PAAI. Low complexity-rich tracts occupy residues 9–29 and 103–126; these read TSSV…TSSS and LSSG…SQTS. Residues 127-139 are compositionally biased toward polar residues; the sequence is INLSTSPTPAQLI. Over residues 140-149 the composition is skewed to low complexity; sequence SRSQASSSTS. Polar residues predominate over residues 225–257; it reads VLSSSQNGPPKSTSQTQSLTICHNKTTVTSSKI. Basic and acidic residues predominate over residues 258-271; the sequence is SQRDPSPESNKKGE. Phosphoserine is present on residues serine 263 and serine 272. The segment covering 274–283 has biased composition (polar residues); that stretch reads SLESRSTAVT. Position 315 is a phosphoserine (serine 315). Over residues 365 to 383 the composition is skewed to polar residues; it reads SNAQSQHCSPIQSHPSPLT. A compositionally biased stretch (low complexity) spans 384 to 398; sequence VSPNQSQSAQQSVVV. The span at 477 to 489 shows a compositional bias: polar residues; that stretch reads PGQQIVSPSHQQY. The span at 490 to 506 shows a compositional bias: low complexity; the sequence is SSLQSSPIPIASPPQMS. Phosphothreonine is present on residues threonine 609 and threonine 614. At serine 616 the chain carries Phosphoserine. Glycyl lysine isopeptide (Lys-Gly) (interchain with G-Cter in SUMO2) cross-links involve residues lysine 691 and lysine 732. The HD1 signature appears at 691 to 720; the sequence is KPPQAIVKPQILTHVIEGFVIQEGLEPFPV. Phosphoserine is present on residues serine 761 and serine 762. The segment at 776–810 adopts an FCS-type zinc-finger fold; that stretch reads EEMDSELLKCEFCGKMGYANEFLRSKRFCTMSCAK. Zn(2+)-binding residues include cysteine 785, cysteine 788, cysteine 804, and cysteine 808. Lysine 810 is covalently cross-linked (Glycyl lysine isopeptide (Lys-Gly) (interchain with G-Cter in SUMO2)). Disordered regions lie at residues 827–847 and 864–889; these read RKPD…PDGA and EEDL…SERE. Residues 919 to 983 enclose the SAM domain; it reads WTVDDVWAFI…CARINSLKES (65 aa).

As to quaternary structure, component of a PRC1-like complex.

Its subcellular location is the nucleus. Functionally, component of a Polycomb group (PcG) multiprotein PRC1-like complex, a complex class required to maintain the transcriptionally repressive state of many genes, including Hox genes, throughout development. PcG PRC1 complex acts via chromatin remodeling and modification of histones; it mediates monoubiquitination of histone H2A 'Lys-119', rendering chromatin heritably changed in its expressibility. This is Polyhomeotic-like protein 3 (PHC3) from Homo sapiens (Human).